The following is a 23-amino-acid chain: Acidic phospholipase A2 Cvv-E6c (23 aa).

Ca(2+) serves as cofactor. In terms of processing, contains 7 disulfide bonds. In terms of tissue distribution, expressed by the venom gland.

The protein localises to the secreted. It carries out the reaction a 1,2-diacyl-sn-glycero-3-phosphocholine + H2O = a 1-acyl-sn-glycero-3-phosphocholine + a fatty acid + H(+). Snake venom phospholipase A2 (PLA2) that significantly inhibits ADP-induced platelet aggregation in platelet-rich plasma of human, rabbit and guinea pig. PLA2 catalyzes the calcium-dependent hydrolysis of the 2-acyl groups in 3-sn-phosphoglycerides. The chain is Acidic phospholipase A2 Cvv-E6c from Crotalus viridis viridis (Prairie rattlesnake).